Consider the following 157-residue polypeptide: Transmembrane protein 50A (157 aa).

Residue S2 is modified to N-acetylserine. S2 carries the post-translational modification Phosphoserine. The next 4 helical transmembrane spans lie at 26 to 46 (IAAG…AVIY), 58 to 78 (ACGV…NGQV), 95 to 115 (IWLF…MWIL), and 126 to 146 (IVYP…GGLV).

The protein belongs to the UPF0220 family.

Its subcellular location is the membrane. The protein is Transmembrane protein 50A (TMEM50A) of Homo sapiens (Human).